A 212-amino-acid chain; its full sequence is Glycerol-3-phosphate acyltransferase (212 aa).

A run of 6 helical transmembrane segments spans residues 8–28 (IFLS…PFAV), 59–79 (AAAA…LWLA), 90–110 (VFAL…FLGF), 122–142 (ILLA…VIIA), 148–168 (SSLA…FGSG), and 169–189 (VAWY…LLLF).

This sequence belongs to the PlsY family. As to quaternary structure, probably interacts with PlsX.

The protein resides in the cell inner membrane. The catalysed reaction is an acyl phosphate + sn-glycerol 3-phosphate = a 1-acyl-sn-glycero-3-phosphate + phosphate. Its pathway is lipid metabolism; phospholipid metabolism. Catalyzes the transfer of an acyl group from acyl-phosphate (acyl-PO(4)) to glycerol-3-phosphate (G3P) to form lysophosphatidic acid (LPA). This enzyme utilizes acyl-phosphate as fatty acyl donor, but not acyl-CoA or acyl-ACP. The sequence is that of Glycerol-3-phosphate acyltransferase from Bordetella petrii (strain ATCC BAA-461 / DSM 12804 / CCUG 43448).